The sequence spans 353 residues: tRNA-specific 2-thiouridylase MnmA 2 (353 aa).

ATP-binding positions include 9–16 (AMSGGVDS) and methionine 35. The active-site Nucleophile is cysteine 98. Cysteine 98 and cysteine 194 are joined by a disulfide. Glycine 122 provides a ligand contact to ATP. The interval 144–146 (KDQ) is interaction with tRNA. Residue cysteine 194 is the Cysteine persulfide intermediate of the active site. The interval 300-301 (RY) is interaction with tRNA.

It belongs to the MnmA/TRMU family.

The protein localises to the cytoplasm. It carries out the reaction S-sulfanyl-L-cysteinyl-[protein] + uridine(34) in tRNA + AH2 + ATP = 2-thiouridine(34) in tRNA + L-cysteinyl-[protein] + A + AMP + diphosphate + H(+). Its function is as follows. Catalyzes the 2-thiolation of uridine at the wobble position (U34) of tRNA, leading to the formation of s(2)U34. This is tRNA-specific 2-thiouridylase MnmA 2 from Clostridium botulinum (strain ATCC 19397 / Type A).